Here is a 187-residue protein sequence, read N- to C-terminus: Elongation factor P (187 aa).

This sequence belongs to the elongation factor P family.

It is found in the cytoplasm. It functions in the pathway protein biosynthesis; polypeptide chain elongation. Involved in peptide bond synthesis. Stimulates efficient translation and peptide-bond synthesis on native or reconstituted 70S ribosomes in vitro. Probably functions indirectly by altering the affinity of the ribosome for aminoacyl-tRNA, thus increasing their reactivity as acceptors for peptidyl transferase. In Chelativorans sp. (strain BNC1), this protein is Elongation factor P.